Reading from the N-terminus, the 1461-residue chain is DNA topoisomerase 2 (1461 aa).

Residues 1–17 show a composition bias toward acidic residues; the sequence is MSESESDYFTDGSEDDF. The segment at 1–61 is disordered; sequence MSESESDYFT…TPKPTNASET (61 aa). Residues 41-52 show a composition bias toward low complexity; that stretch reads TNSTVSSSRSST. Residues Asn120, Asn149, 177–179, and 190–197 contribute to the ATP site; these read SSN and GRNGFGAK. The interaction with DNA stretch occupies residues 382-389; sequence SKKEKGKK. Residue 418 to 420 coordinates ATP; that stretch reads QTK. Positions 498–614 constitute a Toprim domain; sequence CTLILTEGLS…GLLDIPGFLL (117 aa). 3 residues coordinate Mg(2+): Glu504, Asp583, and Asp585. The 475-residue stretch at 752–1226 folds into the Topo IIA-type catalytic domain; the sequence is IPSVLDGFKP…SAKDLWNQDL (475 aa). Catalysis depends on Tyr842, which acts as the O-(5'-phospho-DNA)-tyrosine intermediate. Residues 1024–1033 are interaction with DNA; the sequence is KLVSSLSLAN. Disordered stretches follow at residues 1122-1155 and 1244-1461; these read DGKP…DVGN and RESL…IVDE. A compositionally biased stretch (acidic residues) spans 1133 to 1153; sequence LTGDDADEEEETQEQEGDEDV. Basic residues predominate over residues 1251–1261; it reads GKKKSTKRRAK. Basic and acidic residues-rich tracts occupy residues 1274-1283 and 1406-1417; these read VKVEPKEKKS and DKPEPKERRTRE. Over residues 1434-1461 the composition is skewed to acidic residues; it reads DSDDEDEDEEDDIVMSDGDDDDDFIVDE.

Belongs to the type II topoisomerase family. In terms of assembly, homodimer. It depends on Mg(2+) as a cofactor. Requires Mn(2+) as cofactor. The cofactor is Ca(2+).

Its subcellular location is the nucleus. It carries out the reaction ATP-dependent breakage, passage and rejoining of double-stranded DNA.. Functionally, control of topological states of DNA by transient breakage and subsequent rejoining of DNA strands. Topoisomerase II makes double-strand breaks. The polypeptide is DNA topoisomerase 2 (TOP2) (Candida albicans (Yeast)).